We begin with the raw amino-acid sequence, 507 residues long: NAD(P)H-quinone oxidoreductase chain 4, chloroplastic (507 aa).

15 helical membrane passes run 4–24 (FPWL…IFLL), 37–57 (LCIC…HFQL), 87–107 (IGPI…AWPV), 111–131 (AQLF…SFSS), 134–154 (LLLF…LLSM), 167–187 (FILY…GIGL), 208–228 (ALEV…LPII), 242–262 (HYST…YGLV), 272–292 (AHCL…IYAA), 305–325 (IAYS…SLSD), 330–350 (GAIL…FLAG), 386–406 (LALP…GIIT), 416–436 (ILIA…SLSM), 462–482 (LFVS…PDFV), and 483–503 (LSLS…SIVF).

Belongs to the complex I subunit 4 family.

Its subcellular location is the plastid. The protein localises to the chloroplast thylakoid membrane. The catalysed reaction is a plastoquinone + NADH + (n+1) H(+)(in) = a plastoquinol + NAD(+) + n H(+)(out). The enzyme catalyses a plastoquinone + NADPH + (n+1) H(+)(in) = a plastoquinol + NADP(+) + n H(+)(out). The sequence is that of NAD(P)H-quinone oxidoreductase chain 4, chloroplastic (ndhD) from Oenothera elata subsp. hookeri (Hooker's evening primrose).